Consider the following 109-residue polypeptide: Mitochondrial pyruvate carrier 1 (109 aa).

Ala-2 bears the N-acetylalanine mark. The Mitochondrial matrix segment spans residues 2 to 20 (AGALVRKAADYVRSKDFRD). A helical membrane pass occupies residues 21–41 (YLMSTHFWGPVANWGLPIAAI). The Mother cell cytoplasmic portion of the chain corresponds to 42 to 52 (NDMKKSPEIIS). Residues 53 to 71 (GRMTFALCCYSLTFMRFAY) traverse the membrane as a helical segment. Lys-72 carries the N6-acetyllysine modification. Topologically, residues 72 to 109 (KVQPRNWLLFACHATNEVAQLIQGGRLIRHEMSKKASA) are mitochondrial matrix.

Homodimer. Forms heterodimer with MPC2. The heterodimer is the more stable and dominant form.

Its subcellular location is the mitochondrion inner membrane. The catalysed reaction is pyruvate(out) + H(+)(out) = pyruvate(in) + H(+)(in). In terms of biological role, mediates the uptake of pyruvate into mitochondria. This is Mitochondrial pyruvate carrier 1 (MPC1) from Bos taurus (Bovine).